The primary structure comprises 291 residues: Ribosomal RNA small subunit methyltransferase H (291 aa).

S-adenosyl-L-methionine-binding positions include 36–38 (GGH), D55, A90, D102, and Q109.

This sequence belongs to the methyltransferase superfamily. RsmH family.

The protein resides in the cytoplasm. It carries out the reaction cytidine(1402) in 16S rRNA + S-adenosyl-L-methionine = N(4)-methylcytidine(1402) in 16S rRNA + S-adenosyl-L-homocysteine + H(+). Specifically methylates the N4 position of cytidine in position 1402 (C1402) of 16S rRNA. The polypeptide is Ribosomal RNA small subunit methyltransferase H (Thermosipho africanus (strain TCF52B)).